A 342-amino-acid chain; its full sequence is S-adenosyl-L-methionine-dependent tRNA 4-demethylwyosine synthase (342 aa).

[4Fe-4S] cluster-binding residues include C45, C58, C71, C81, C85, and C88. Residues Y64 to E312 enclose the Radical SAM core domain.

This sequence belongs to the TYW1 family. Monomer. [4Fe-4S] cluster is required as a cofactor.

Its subcellular location is the cytoplasm. The enzyme catalyses N(1)-methylguanosine(37) in tRNA(Phe) + pyruvate + S-adenosyl-L-methionine = 4-demethylwyosine(37) in tRNA(Phe) + 5'-deoxyadenosine + L-methionine + CO2 + H2O. In terms of biological role, component of the wyosine derivatives biosynthesis pathway that catalyzes the condensation of N-methylguanine with 2 carbon atoms from pyruvate to form the tricyclic 4-demethylwyosine (imG-14) on guanosine-37 of tRNA(Phe). This Pyrococcus abyssi (strain GE5 / Orsay) protein is S-adenosyl-L-methionine-dependent tRNA 4-demethylwyosine synthase.